Reading from the N-terminus, the 645-residue chain is Heat shock protein SSA2 (645 aa).

N-acetylserine is present on Ser-2. The segment at 581-645 is disordered; the sequence is ANQTATQEEF…NDGPTVEEVD (65 aa). Over residues 611–621 the composition is skewed to low complexity; sequence AGATPSGAAGA.

It belongs to the heat shock protein 70 family. As to quaternary structure, binds human histatin-5, an antifungal peptide from saliva.

The protein localises to the cytoplasm. It localises to the secreted. It is found in the cell wall. Functionally, heat shock protein that may play a role in the transport of polypeptides both across the mitochondrial membranes and into the endoplasmic reticulum. In terms of biological role, acts as a highly immunodominant antigen. Plays a role in the sensitivity to, and the import of candidacidal beta-defensin peptides. HSP70/SSA1 and SSA2 bind histatin-5, a peptide from human saliva, and mediates its fungicidal activity. SSA2 facilitates fungicidal activity of Hst 5 in binding and intracellular translocation, whereas HSP70/SSA1 appears to have a lesser functional role in Hst 5 toxicity. The protein is Heat shock protein SSA2 of Candida albicans (strain SC5314 / ATCC MYA-2876) (Yeast).